The chain runs to 316 residues: Ribose-phosphate pyrophosphokinase (316 aa).

Residues 42–44 and 101–102 contribute to the ATP site; these read DGE and RQ. Positions 135 and 174 each coordinate Mg(2+). K197 is an active-site residue. D-ribose 5-phosphate-binding positions include R199, D223, and 227-231; that span reads DTAGT.

This sequence belongs to the ribose-phosphate pyrophosphokinase family. Class I subfamily. As to quaternary structure, homohexamer. The cofactor is Mg(2+).

The protein resides in the cytoplasm. It carries out the reaction D-ribose 5-phosphate + ATP = 5-phospho-alpha-D-ribose 1-diphosphate + AMP + H(+). Its pathway is metabolic intermediate biosynthesis; 5-phospho-alpha-D-ribose 1-diphosphate biosynthesis; 5-phospho-alpha-D-ribose 1-diphosphate from D-ribose 5-phosphate (route I): step 1/1. Its function is as follows. Involved in the biosynthesis of the central metabolite phospho-alpha-D-ribosyl-1-pyrophosphate (PRPP) via the transfer of pyrophosphoryl group from ATP to 1-hydroxyl of ribose-5-phosphate (Rib-5-P). This Halalkalibacterium halodurans (strain ATCC BAA-125 / DSM 18197 / FERM 7344 / JCM 9153 / C-125) (Bacillus halodurans) protein is Ribose-phosphate pyrophosphokinase.